The chain runs to 209 residues: Probable glutathione peroxidase 8 (209 aa).

N-acetylmethionine is present on M1. The helical transmembrane segment at V18–L40 threads the bilayer. Residue C79 is part of the active site.

The protein belongs to the glutathione peroxidase family.

It localises to the membrane. The catalysed reaction is 2 glutathione + H2O2 = glutathione disulfide + 2 H2O. The sequence is that of Probable glutathione peroxidase 8 (GPX8) from Homo sapiens (Human).